A 185-amino-acid chain; its full sequence is Elongation factor P (185 aa).

The protein belongs to the elongation factor P family.

The protein localises to the cytoplasm. It functions in the pathway protein biosynthesis; polypeptide chain elongation. Its function is as follows. Involved in peptide bond synthesis. Stimulates efficient translation and peptide-bond synthesis on native or reconstituted 70S ribosomes in vitro. Probably functions indirectly by altering the affinity of the ribosome for aminoacyl-tRNA, thus increasing their reactivity as acceptors for peptidyl transferase. This is Elongation factor P from Desulforudis audaxviator (strain MP104C).